We begin with the raw amino-acid sequence, 571 residues long: Urease subunit alpha (571 aa).

The region spanning 132-571 (GGIDAHIHFI…VALAQRYFLF (440 aa)) is the Urease domain. The Ni(2+) site is built by His-137, His-139, and Lys-220. Lys-220 is subject to N6-carboxylysine. His-222 provides a ligand contact to substrate. His-249 and His-275 together coordinate Ni(2+). The Proton donor role is filled by His-323. Asp-363 lines the Ni(2+) pocket.

It belongs to the metallo-dependent hydrolases superfamily. Urease alpha subunit family. Heterotrimer of UreA (gamma), UreB (beta) and UreC (alpha) subunits. Three heterotrimers associate to form the active enzyme. The cofactor is Ni cation. Post-translationally, carboxylation allows a single lysine to coordinate two nickel ions.

It is found in the cytoplasm. It catalyses the reaction urea + 2 H2O + H(+) = hydrogencarbonate + 2 NH4(+). It functions in the pathway nitrogen metabolism; urea degradation; CO(2) and NH(3) from urea (urease route): step 1/1. In Halalkalibacterium halodurans (strain ATCC BAA-125 / DSM 18197 / FERM 7344 / JCM 9153 / C-125) (Bacillus halodurans), this protein is Urease subunit alpha.